The following is a 206-amino-acid chain: Large ribosomal subunit protein uL4 (206 aa).

A disordered region spans residues 63-97; that stretch reads MYKQKGTGRARHHSARAPQFRGGGKAHGPVVRSHE. Over residues 64 to 77 the composition is skewed to basic residues; it reads YKQKGTGRARHHSA.

Belongs to the universal ribosomal protein uL4 family. As to quaternary structure, part of the 50S ribosomal subunit.

In terms of biological role, one of the primary rRNA binding proteins, this protein initially binds near the 5'-end of the 23S rRNA. It is important during the early stages of 50S assembly. It makes multiple contacts with different domains of the 23S rRNA in the assembled 50S subunit and ribosome. Its function is as follows. Forms part of the polypeptide exit tunnel. In Rhizobium etli (strain CIAT 652), this protein is Large ribosomal subunit protein uL4.